A 184-amino-acid chain; its full sequence is Crossover junction endodeoxyribonuclease RuvC (184 aa).

Residues Asp-7, Glu-68, and Asp-141 contribute to the active site. The Mg(2+) site is built by Asp-7, Glu-68, and Asp-141.

Belongs to the RuvC family. As to quaternary structure, homodimer which binds Holliday junction (HJ) DNA. The HJ becomes 2-fold symmetrical on binding to RuvC with unstacked arms; it has a different conformation from HJ DNA in complex with RuvA. In the full resolvosome a probable DNA-RuvA(4)-RuvB(12)-RuvC(2) complex forms which resolves the HJ. Requires Mg(2+) as cofactor.

The protein resides in the cytoplasm. It catalyses the reaction Endonucleolytic cleavage at a junction such as a reciprocal single-stranded crossover between two homologous DNA duplexes (Holliday junction).. Functionally, the RuvA-RuvB-RuvC complex processes Holliday junction (HJ) DNA during genetic recombination and DNA repair. Endonuclease that resolves HJ intermediates. Cleaves cruciform DNA by making single-stranded nicks across the HJ at symmetrical positions within the homologous arms, yielding a 5'-phosphate and a 3'-hydroxyl group; requires a central core of homology in the junction. The consensus cleavage sequence is 5'-(A/T)TT(C/G)-3'. Cleavage occurs on the 3'-side of the TT dinucleotide at the point of strand exchange. HJ branch migration catalyzed by RuvA-RuvB allows RuvC to scan DNA until it finds its consensus sequence, where it cleaves and resolves the cruciform DNA. The protein is Crossover junction endodeoxyribonuclease RuvC of Mycobacterium ulcerans (strain Agy99).